Consider the following 87-residue polypeptide: Tachykinin-1 (87 aa).

The first 22 residues, 1–22 (MIRVGLILCCIFIAGVFEASSA), serve as a signal peptide directing secretion. Positions 23–37 (DDMLTAHNLIKRSEV) are excised as a propeptide. Met-49 carries the post-translational modification Methionine amide. Positions 52–87 (SEELTRRLIQHPGSMSETSKRGPPKKVSRRPYILKK) are excised as a propeptide. The segment at 61-87 (QHPGSMSETSKRGPPKKVSRRPYILKK) is disordered. A compositionally biased stretch (basic residues) spans 73-87 (GPPKKVSRRPYILKK).

Belongs to the tachykinin family. As to expression, expressed in the posterior salivary gland and more specifically in the mucus-secreting gland cells.

It localises to the secreted. Its function is as follows. Tachykinins are active peptides which excite neurons, evoke behavioral responses, are potent vasodilators and secretagogues, and contract (directly or indirectly) many smooth muscles. The protein is Tachykinin-1 of Octopus vulgaris (Common octopus).